We begin with the raw amino-acid sequence, 318 residues long: Biotin synthase (318 aa).

In terms of domain architecture, Radical SAM core spans 44–273 (LCGKKFNLCT…EKQIRLAGGR (230 aa)). Cysteine 62, cysteine 66, and cysteine 69 together coordinate [4Fe-4S] cluster. The [2Fe-2S] cluster site is built by serine 106, cysteine 138, cysteine 198, and arginine 268.

It belongs to the radical SAM superfamily. Biotin synthase family. Homodimer. Requires [4Fe-4S] cluster as cofactor. The cofactor is [2Fe-2S] cluster.

It carries out the reaction (4R,5S)-dethiobiotin + (sulfur carrier)-SH + 2 reduced [2Fe-2S]-[ferredoxin] + 2 S-adenosyl-L-methionine = (sulfur carrier)-H + biotin + 2 5'-deoxyadenosine + 2 L-methionine + 2 oxidized [2Fe-2S]-[ferredoxin]. It functions in the pathway cofactor biosynthesis; biotin biosynthesis; biotin from 7,8-diaminononanoate: step 2/2. Functionally, catalyzes the conversion of dethiobiotin (DTB) to biotin by the insertion of a sulfur atom into dethiobiotin via a radical-based mechanism. The sequence is that of Biotin synthase from Clostridium botulinum (strain Alaska E43 / Type E3).